Here is a 209-residue protein sequence, read N- to C-terminus: Uracil phosphoribosyltransferase (209 aa).

5-phospho-alpha-D-ribose 1-diphosphate is bound by residues Arg79, Arg104, and 131–139 (DPMLATGGS). Uracil contacts are provided by residues Ile194 and 199-201 (GDA). Asp200 is a 5-phospho-alpha-D-ribose 1-diphosphate binding site.

This sequence belongs to the UPRTase family. It depends on Mg(2+) as a cofactor.

The catalysed reaction is UMP + diphosphate = 5-phospho-alpha-D-ribose 1-diphosphate + uracil. It participates in pyrimidine metabolism; UMP biosynthesis via salvage pathway; UMP from uracil: step 1/1. Allosterically activated by GTP. Its function is as follows. Catalyzes the conversion of uracil and 5-phospho-alpha-D-ribose 1-diphosphate (PRPP) to UMP and diphosphate. The polypeptide is Uracil phosphoribosyltransferase (Exiguobacterium sibiricum (strain DSM 17290 / CCUG 55495 / CIP 109462 / JCM 13490 / 255-15)).